A 908-amino-acid chain; its full sequence is Mycobactin import ATP-binding/permease protein IrtA (908 aa).

Residues 1-329 (MARGFQGVML…SRLLAPLKKP (329 aa)) lie on the Cytoplasmic side of the membrane. Residues 15–124 (ARDHQATVVD…MGSRGFSVPE (110 aa)) form the FAD-binding FR-type domain. The siderophore interaction domain stretch occupies residues 16–245 (RDHQATVVDK…AQAYWTEGRA (230 aa)). Residues 70–73 (RAYT), 87–91 (DMVLH), 97–98 (AS), and 241–243 (TEG) contribute to the FAD site. A disordered region spans residues 245–311 (AMGSSRGETS…GAAQPRTPVR (67 aa)). Residues 253–309 (TSTPAKPAAKTAPAKAAAKPAAASGAGTPEHAAAPAAATTGAPQAAPAPGAAQPRTP) are compositionally biased toward low complexity. A helical transmembrane segment spans residues 330–350 (LIVSGVLQALITLIELAPFVL). The ABC transmembrane type-1 domain occupies 331–613 (IVSGVLQALI…IGYGLSGIQT (283 aa)). Over 351–371 (LVELARLLLGGAEAERLWTLG) the chain is Periplasmic. Residues 372-392 (LTAVSLIGLGAVLAAAMTLWL) traverse the membrane as a helical segment. Residues 393–444 (HRVDARFAHELRGRLLTKLSRLPLGWFTRRGSASTKQLVQDDTLALHYLITH) are Cytoplasmic-facing. The chain crosses the membrane as a helical span at residues 445–465 (AIPDAVAAVVAPVAVLVYLFV). The Periplasmic portion of the chain corresponds to 466–469 (ADWR). Residues 470–490 (VALVLFIPVLVYLVLMSVMTI) traverse the membrane as a helical segment. At 491–557 (QSGSKIAQAP…PFVGKKTLMD (67 aa)) the chain is on the cytoplasmic side. A helical transmembrane segment spans residues 558 to 578 (LVTRPATFLWIILVAGVPLVV). Over 579-586 (TGRMDPVN) the chain is Periplasmic. The helical transmembrane segment at 587 to 607 (LLPFLLLGTTFGARLLGIGYG) threads the bilayer. Over 608-908 (LSGIQTGMLA…VSADAVEVGR (301 aa)) the chain is Cytoplasmic. The ABC transporter domain maps to 654-887 (VELDRVSFEY…GGRYRGLWDS (234 aa)). 687-694 (GPSGSGKS) contacts ATP.

The protein belongs to the ABC transporter superfamily. Siderophore-Fe(3+) uptake transporter (SIUT) (TC 3.A.1.21) family. Forms a heterodimer with IrtB. FAD is required as a cofactor.

It is found in the cell inner membrane. With respect to regulation, the ATPase activity of IrtAB is stimulated more than 38-fold in the presence of Fe-MBT, and more than 10-fold in the presence of Fe-cMBT. Its function is as follows. Part of the ABC transporter complex IrtAB involved in the import of iron-bound mycobactin (Fe-MBT) and carboxymycobactin (Fe-cMBT). Has a preference for Fe-MBT over Fe-cMBT. Mycobactins are then reduced by the siderophore interaction domain to facilitate iron release in the bacterial cell. Transmembrane domains (TMD) form a pore in the membrane and the ATP-binding domain (NBD) is responsible for energy generation. In Mycolicibacterium thermoresistibile (strain ATCC 19527 / DSM 44167 / CIP 105390 / JCM 6362 / NCTC 10409 / 316) (Mycobacterium thermoresistibile), this protein is Mycobactin import ATP-binding/permease protein IrtA.